Consider the following 388-residue polypeptide: Succinyl-diaminopimelate desuccinylase (388 aa).

Position 84 (His-84) interacts with Zn(2+). Asp-86 is an active-site residue. Residue Asp-115 coordinates Zn(2+). Glu-146 functions as the Proton acceptor in the catalytic mechanism. Zn(2+) is bound by residues Glu-147, Glu-175, and His-360.

It belongs to the peptidase M20A family. DapE subfamily. As to quaternary structure, homodimer. Requires Zn(2+) as cofactor. Co(2+) is required as a cofactor.

The enzyme catalyses N-succinyl-(2S,6S)-2,6-diaminopimelate + H2O = (2S,6S)-2,6-diaminopimelate + succinate. It participates in amino-acid biosynthesis; L-lysine biosynthesis via DAP pathway; LL-2,6-diaminopimelate from (S)-tetrahydrodipicolinate (succinylase route): step 3/3. Functionally, catalyzes the hydrolysis of N-succinyl-L,L-diaminopimelic acid (SDAP), forming succinate and LL-2,6-diaminopimelate (DAP), an intermediate involved in the bacterial biosynthesis of lysine and meso-diaminopimelic acid, an essential component of bacterial cell walls. This is Succinyl-diaminopimelate desuccinylase from Helicobacter pylori (strain J99 / ATCC 700824) (Campylobacter pylori J99).